The sequence spans 421 residues: ATP-dependent RNA helicase RhlB (421 aa).

Positions 9–37 (QKFSDFALHPKVVEVLEKKGFHNCTPIQA) match the Q motif motif. Residues 40–219 (LPLTLAGRDV…FEQMNNAEYI (180 aa)) enclose the Helicase ATP-binding domain. 53-60 (AQTGTGKT) is a binding site for ATP. The DEAD box motif lies at 165-168 (DEAD). The region spanning 245 to 390 (RLLQTLIEEE…VSKYNPDALM (146 aa)) is the Helicase C-terminal domain. The segment at 392 to 421 (DLPKPLRLTRPRTGNGPRRTGAPRNRRRSG) is disordered. Low complexity predominate over residues 402-414 (PRTGNGPRRTGAP).

It belongs to the DEAD box helicase family. RhlB subfamily. Component of the RNA degradosome, which is a multiprotein complex involved in RNA processing and mRNA degradation.

Its subcellular location is the cytoplasm. The catalysed reaction is ATP + H2O = ADP + phosphate + H(+). Functionally, DEAD-box RNA helicase involved in RNA degradation. Has RNA-dependent ATPase activity and unwinds double-stranded RNA. This is ATP-dependent RNA helicase RhlB from Shigella boydii serotype 18 (strain CDC 3083-94 / BS512).